The primary structure comprises 890 residues: Serine/threonine-protein kinase D3 (890 aa).

Phosphoserine is present on residues Ser-6, Ser-27, Ser-37, Ser-41, and Ser-44. Residues 154 to 204 (PHTLYVHSYKAPTFCDYCGEMLWGLVRQGLKCEGCGLNYHKRCAFKIPNNC) form a Phorbol-ester/DAG-type 1 zinc finger. Ser-213 and Ser-216 each carry phosphoserine. The Phorbol-ester/DAG-type 2 zinc-finger motif lies at 271–321 (PHTFAVHSYTRPTICQYCKRLLKGLFRQGMQCKDCKFNCHKRCASKVPRDC). Residues 332–371 (SSLGTDTDIPMDIDNNDINSDSSRGLDDTEEPSPPEDKMF) form a disordered region. Residues Ser-364, Ser-391, and Ser-395 each carry the phosphoserine modification. A PH domain is found at 416-532 (TMVKEGWMVH…WEKAIRQALM (117 aa)). Tyr-426 carries the phosphotyrosine modification. Ser-442 bears the Phosphoserine mark. Position 457 is a phosphotyrosine (Tyr-457). Thr-535 carries the post-translational modification Phosphothreonine. Ser-539 carries the phosphoserine modification. Positions 576 to 832 (IFADEVLGSG…VDKSLSHPWL (257 aa)) constitute a Protein kinase domain. ATP contacts are provided by residues 582–590 (LGSGQFGIV) and Lys-605. The Proton acceptor role is filled by Asp-699. Phosphoserine; by PKC is present on Ser-731. Ser-735 carries the phosphoserine; by autocatalysis modification. Tyr-742 bears the Phosphotyrosine mark.

This sequence belongs to the protein kinase superfamily. CAMK Ser/Thr protein kinase family. PKD subfamily. The cofactor is Mg(2+). Ubiquitous.

It localises to the cytoplasm. The protein resides in the membrane. The enzyme catalyses L-seryl-[protein] + ATP = O-phospho-L-seryl-[protein] + ADP + H(+). The catalysed reaction is L-threonyl-[protein] + ATP = O-phospho-L-threonyl-[protein] + ADP + H(+). With respect to regulation, activated by DAG and phorbol esters. Phorbol-ester/DAG-type domains 1 and 2 bind both DAG and phorbol ester with high affinity and mediate translocation to the cell membrane. Autophosphorylation of Ser-735 and phosphorylation of Ser-731 by PKC relieves auto-inhibition by the PH domain. Its function is as follows. Converts transient diacylglycerol (DAG) signals into prolonged physiological effects, downstream of PKC. Involved in resistance to oxidative stress. The protein is Serine/threonine-protein kinase D3 (PRKD3) of Homo sapiens (Human).